Here is a 293-residue protein sequence, read N- to C-terminus: Acetylglutamate kinase (293 aa).

Substrate-binding positions include 60–61 (GG), R82, and N188.

This sequence belongs to the acetylglutamate kinase family. ArgB subfamily.

Its subcellular location is the cytoplasm. The catalysed reaction is N-acetyl-L-glutamate + ATP = N-acetyl-L-glutamyl 5-phosphate + ADP. It participates in amino-acid biosynthesis; L-arginine biosynthesis; N(2)-acetyl-L-ornithine from L-glutamate: step 2/4. Functionally, catalyzes the ATP-dependent phosphorylation of N-acetyl-L-glutamate. This is Acetylglutamate kinase from Methanothermobacter thermautotrophicus (strain ATCC 29096 / DSM 1053 / JCM 10044 / NBRC 100330 / Delta H) (Methanobacterium thermoautotrophicum).